We begin with the raw amino-acid sequence, 127 residues long: Protein ApaG (127 aa).

In terms of domain architecture, ApaG spans 3-127 (ESEKYRIEVE…FMLAMPRVLH (125 aa)).

This chain is Protein ApaG, found in Aromatoleum aromaticum (strain DSM 19018 / LMG 30748 / EbN1) (Azoarcus sp. (strain EbN1)).